A 426-amino-acid chain; its full sequence is Citrate transporter (426 aa).

The next 12 helical transmembrane spans lie at 1–21, 22–42, 59–79, 86–106, 137–157, 176–196, 232–252, 278–298, 318–338, 343–363, 377–397, and 406–426; these read MLAI…MSNR, LSAL…SGFG, TGIM…SGLF, ILSF…VLTM, LVLA…PWGG, PLIP…YILG, LLTV…PVLF, AGNA…TGIL, AMGP…TFFM, FYFG…IDAA, LLSP…VSFG, and WAVG…IISF.

The protein belongs to the CitM (TC 2.A.11) transporter family.

Its subcellular location is the cell membrane. Its function is as follows. Transports the free citrate anion. Probably cotransports citrate and at least three or four protons. The citrate uptake is inhibited by the presence of magnesium ions. The polypeptide is Citrate transporter (citN) (Bacillus subtilis (strain 168)).